The primary structure comprises 855 residues: Spindle and centriole-associated protein 1 (855 aa).

Residues 164–200 (QALNDVDGEEEGTVTSQSGESENENELDNSLNSQSNT) are disordered. Position 235 is a phosphothreonine (T235). Residues 300 to 311 (KPNLHALSKPKK) show a composition bias toward basic residues. The segment at 300 to 328 (KPNLHALSKPKKNMLSGSTTSADLPNRTN) is disordered. Residues 314–328 (LSGSTTSADLPNRTN) are compositionally biased toward polar residues. Residues 325–437 (NRTNSNLDVL…TQARLRQYMV (113 aa)) adopt a coiled-coil conformation. S640 and S644 each carry phosphoserine. The stretch at 725 to 751 (GSMEERIAELNRQSMEARGKLLQLIEQ) forms a coiled coil. A phosphoserine mark is found at S760, S764, and S819. Positions 789-834 (EAPESSKCSTVSPVSEINTRRSSGATSNSCSPLNATSGSGRFTPLN) are disordered. Residues 794–828 (SKCSTVSPVSEINTRRSSGATSNSCSPLNATSGSG) show a composition bias toward polar residues.

Interacts with CEP120.

The protein resides in the cytoplasm. The protein localises to the cytoskeleton. It localises to the microtubule organizing center. It is found in the centrosome. Its subcellular location is the centriole. The protein resides in the spindle. In terms of biological role, regulator required for centriole duplication, for proper bipolar spindle formation and chromosome congression in mitosis. This Pongo abelii (Sumatran orangutan) protein is Spindle and centriole-associated protein 1 (SPICE1).